Here is a 67-residue protein sequence, read N- to C-terminus: Protein AaeX (67 aa).

A run of 2 helical transmembrane segments spans residues 3-23 and 43-63; these read LFPV…KLLL and FVWH…YLIS.

The protein belongs to the AaeX family.

Its subcellular location is the cell membrane. The sequence is that of Protein AaeX from Salmonella gallinarum (strain 287/91 / NCTC 13346).